The sequence spans 45 residues: Photosystem II reaction center protein K (45 aa).

Residues 1-8 (MEAALLLA) constitute a propeptide that is removed on maturation. A helical membrane pass occupies residues 24-44 (LPLIPLFFLLLAFVWQAAVGF).

This sequence belongs to the PsbK family. PSII is composed of 1 copy each of membrane proteins PsbA, PsbB, PsbC, PsbD, PsbE, PsbF, PsbH, PsbI, PsbJ, PsbK, PsbL, PsbM, PsbT, PsbX, PsbY, PsbZ, Psb30/Ycf12, peripheral proteins PsbO, CyanoQ (PsbQ), PsbU, PsbV and a large number of cofactors. It forms dimeric complexes.

Its subcellular location is the cellular thylakoid membrane. In terms of biological role, one of the components of the core complex of photosystem II (PSII). PSII is a light-driven water:plastoquinone oxidoreductase that uses light energy to abstract electrons from H(2)O, generating O(2) and a proton gradient subsequently used for ATP formation. It consists of a core antenna complex that captures photons, and an electron transfer chain that converts photonic excitation into a charge separation. This Picosynechococcus sp. (strain ATCC 27264 / PCC 7002 / PR-6) (Agmenellum quadruplicatum) protein is Photosystem II reaction center protein K.